Here is an 857-residue protein sequence, read N- to C-terminus: Protein dalmatian (857 aa).

2 disordered regions span residues 1–50 (MVRT…KLSI) and 146–194 (VQKS…FFHR). Composition is skewed to polar residues over residues 146-156 (VQKSTQPQNIK) and 165-176 (SPCQQRIRSKSP). A phosphoserine mark is found at serine 173, serine 175, serine 184, and serine 222. Residues 251–271 (GKPRAKRTAKKVRPVGNRRKV) are compositionally biased toward basic residues. The disordered stretch occupies residues 251–281 (GKPRAKRTAKKVRPVGNRRKVSTKDNEPEPV). Serine 405 carries the phosphoserine modification. 2 disordered regions span residues 470 to 514 (SICP…NAEN) and 737 to 830 (PPRP…RDIE). The segment covering 771–781 (KQPRRTYVKER) has biased composition (basic and acidic residues). Residues 797 to 806 (SESEDEDEQD) are compositionally biased toward acidic residues. The segment covering 807-816 (SHDKSLDSPE) has biased composition (basic and acidic residues). Residues 817 to 826 (KKRHHVKRPR) show a composition bias toward basic residues.

It is found in the nucleus. The protein resides in the chromosome. Regulator of sister chromatid cohesion in mitosis. Probably involved in development of the central nervous system. This Drosophila melanogaster (Fruit fly) protein is Protein dalmatian (dmt).